We begin with the raw amino-acid sequence, 348 residues long: Protein RecA (348 aa).

An ATP-binding site is contributed by 65-72 (GPESSGKT).

The protein belongs to the RecA family.

It is found in the cytoplasm. Functionally, can catalyze the hydrolysis of ATP in the presence of single-stranded DNA, the ATP-dependent uptake of single-stranded DNA by duplex DNA, and the ATP-dependent hybridization of homologous single-stranded DNAs. It interacts with LexA causing its activation and leading to its autocatalytic cleavage. This chain is Protein RecA, found in Vibrio anguillarum (Listonella anguillarum).